The chain runs to 218 residues: MNCRSEVLEVSVEGRQVEEAMLAVLHTVLLHRSTGKFHYKKEGTYSIGTVGIQDVDCDFIDFTYVRVSSEELDRALRKVVGEFKDALRNSGGDGLGQMSLEFYQKKKSRWPFSDECIPWEVWTVKVHVVALATEQERQICREKVGEKLCEKIINIVEVMSRHEYLPKMPTQSEVDNVFDTGLRDVQPYLYKISFQITEALGTSVTTTMRRLIKDTLAL.

Residues 152–156 are important for interaction with ATG13; it reads IINIV.

Belongs to the ATG101 family. In terms of assembly, interacts with ATG13. Associates with a complex composed of ATG13, ULK1 and RB1CC1; the association with this complex requires the presence of ATG13.

It localises to the cytoplasm. It is found in the preautophagosomal structure. Autophagy factor required for autophagosome formation. Stabilizes ATG13, protecting it from proteasomal degradation. The sequence is that of Autophagy-related protein 101 (Atg101) from Mus musculus (Mouse).